We begin with the raw amino-acid sequence, 887 residues long: 3-hydroxy-3-methylglutaryl-coenzyme A reductase (887 aa).

At M1–H9 the chain is on the cytoplasmic side. Residues G10–G39 form a helical membrane-spanning segment. Over N40–D56 the chain is Lumenal. A helical membrane pass occupies residues V57–F78. The SSD domain maps to D61 to L218. The short motif at Y75–F78 is the INSIG-binding motif element. Over Q79 to K89 the chain is Cytoplasmic. K89 participates in a covalent cross-link: Glycyl lysine isopeptide (Lys-Gly) (interchain with G-Cter in ubiquitin). Residues Y90–L114 form a helical membrane-spanning segment. At D115–E123 the chain is on the lumenal side. The helical transmembrane segment at A124–S149 threads the bilayer. Topologically, residues Q150–R159 are cytoplasmic. The helical transmembrane segment at G160–V187 threads the bilayer. The Lumenal segment spans residues R188–E191. A helical membrane pass occupies residues I192–L220. Residues E221–K248 are Cytoplasmic-facing. A Glycyl lysine isopeptide (Lys-Gly) (interchain with G-Cter in ubiquitin) cross-link involves residue K248. The chain crosses the membrane as a helical span at residues P249 to A275. Residues D276 to K314 lie on the Lumenal side of the membrane. N281 is a glycosylation site (N-linked (GlcNAc...) asparagine). The chain crosses the membrane as a helical span at residues M315–F339. At E340 to A887 the chain is on the cytoplasmic side. Catalysis depends on charge relay system residues E558, K690, and D766. H865 acts as the Proton donor in catalysis. S871 carries the post-translational modification Phosphoserine; by AMPK.

This sequence belongs to the HMG-CoA reductase family. In terms of assembly, homotetramer. Homodimer. Interacts (via its SSD) with INSIG1; the interaction, accelerated by sterols, leads to the recruitment of HMGCR to AMFR/gp78 for its ubiquitination by the sterol-mediated ERAD pathway. Interacts with UBIAD1. In terms of processing, N-glycosylated. Glycosylated with high mannose chains including Man(6)(GlcNAc)(2), Man(7)(GlcNAc)(2) and Man(8)(GlcNAc)(2). Deglycosylated by NGLY1 on release from the endoplasmic reticulum (ER) in a sterol-mediated manner. Undergoes sterol-mediated ubiquitination and ER-associated degradation (ERAD). Accumulation of sterols in the endoplasmic reticulum (ER) membrane, triggers binding of the reductase to the ER membrane protein INSIG1 or INSIG2. The INSIG1 binding leads to the recruitment of the ubiquitin ligase, AMFR/gp78, RNF139 or RNF145, initiating ubiquitination of the reductase. The ubiquitinated reductase is then extracted from the ER membrane and delivered to cytosolic 26S proteosomes by a mechanism probably mediated by the ATPase Valosin-containing protein VCP/p97. The INSIG2-binding leads to the recruitment of the ubiquitin ligase RNF139, initiating ubiquitination of the reductase. Lys-248 is the main site of ubiquitination. Ubiquitination is enhanced by the presence of a geranylgeranylated protein. Post-translationally, phosphorylated. Phosphorylation at Ser-871 reduces the catalytic activity.

Its subcellular location is the endoplasmic reticulum membrane. It localises to the peroxisome membrane. The enzyme catalyses (R)-mevalonate + 2 NADP(+) + CoA = (3S)-3-hydroxy-3-methylglutaryl-CoA + 2 NADPH + 2 H(+). It functions in the pathway metabolic intermediate biosynthesis; (R)-mevalonate biosynthesis; (R)-mevalonate from acetyl-CoA: step 3/3. With respect to regulation, regulated by a negative feedback mechanism through sterols and non-sterol metabolites derived from mevalonate. Phosphorylation at Ser-871 down-regulates the catalytic activity. In terms of biological role, catalyzes the conversion of (3S)-hydroxy-3-methylglutaryl-CoA (HMG-CoA) to mevalonic acid, the rate-limiting step in the synthesis of cholesterol and other isoprenoids, thus plays a critical role in cellular cholesterol homeostasis. The protein is 3-hydroxy-3-methylglutaryl-coenzyme A reductase (HMGCR) of Cricetulus griseus (Chinese hamster).